The primary structure comprises 187 residues: Putative manganese efflux pump MntP (187 aa).

The next 6 membrane-spanning stretches (helical) occupy residues 3 to 23, 41 to 61, 62 to 82, 107 to 129, 143 to 163, and 166 to 186; these read MSAT…ASIG, LIFG…GFFA, SQYI…ILGG, LLVC…LAFL, ATMI…PILG, and AEII…YEHL.

Belongs to the MntP (TC 9.B.29) family.

Its subcellular location is the cell inner membrane. In terms of biological role, probably functions as a manganese efflux pump. The polypeptide is Putative manganese efflux pump MntP (Pectobacterium atrosepticum (strain SCRI 1043 / ATCC BAA-672) (Erwinia carotovora subsp. atroseptica)).